Consider the following 268-residue polypeptide: Glutamate racemase (268 aa).

Residues 14-15 (DS) and 46-47 (YG) each bind substrate. Cys78 serves as the catalytic Proton donor/acceptor. 79–80 (NS) contributes to the substrate binding site. Cys190 acts as the Proton donor/acceptor in catalysis. 191–192 (TH) contacts substrate.

Belongs to the aspartate/glutamate racemases family.

It catalyses the reaction L-glutamate = D-glutamate. The protein operates within cell wall biogenesis; peptidoglycan biosynthesis. Functionally, provides the (R)-glutamate required for cell wall biosynthesis. The protein is Glutamate racemase of Treponema pallidum (strain Nichols).